The sequence spans 318 residues: Thymidylate synthase (318 aa).

DUMP contacts are provided by residues R25 and 180 to 181; that span reads RR. C200 acts as the Nucleophile in catalysis. DUMP-binding positions include 220–223, N231, and 261–263; these read RSGD and HIY. Residue D223 participates in (6R)-5,10-methylene-5,6,7,8-tetrahydrofolate binding. A (6R)-5,10-methylene-5,6,7,8-tetrahydrofolate-binding site is contributed by A317.

This sequence belongs to the thymidylate synthase family. Bacterial-type ThyA subfamily. Homodimer.

It localises to the cytoplasm. It carries out the reaction dUMP + (6R)-5,10-methylene-5,6,7,8-tetrahydrofolate = 7,8-dihydrofolate + dTMP. The protein operates within pyrimidine metabolism; dTTP biosynthesis. In terms of biological role, catalyzes the reductive methylation of 2'-deoxyuridine-5'-monophosphate (dUMP) to 2'-deoxythymidine-5'-monophosphate (dTMP) while utilizing 5,10-methylenetetrahydrofolate (mTHF) as the methyl donor and reductant in the reaction, yielding dihydrofolate (DHF) as a by-product. This enzymatic reaction provides an intracellular de novo source of dTMP, an essential precursor for DNA biosynthesis. This chain is Thymidylate synthase, found in Lactobacillus helveticus (strain DPC 4571).